The following is a 78-amino-acid chain: DNA gyrase inhibitor YacG (78 aa).

4 residues coordinate Zn(2+): Cys-7, Cys-10, Cys-26, and Cys-30.

This sequence belongs to the DNA gyrase inhibitor YacG family. Interacts with GyrB. Zn(2+) is required as a cofactor.

In terms of biological role, inhibits all the catalytic activities of DNA gyrase by preventing its interaction with DNA. Acts by binding directly to the C-terminal domain of GyrB, which probably disrupts DNA binding by the gyrase. The chain is DNA gyrase inhibitor YacG from Colwellia psychrerythraea (strain 34H / ATCC BAA-681) (Vibrio psychroerythus).